Reading from the N-terminus, the 520-residue chain is Anthranilate synthase component 1 (520 aa).

L-tryptophan-binding positions include Ser-40 and 291–293 (PYM). Chorismate is bound at residue 328–329 (GT). Glu-361 is a binding site for Mg(2+). Residues Tyr-449, Arg-469, 483–485 (GAG), and Gly-485 each bind chorismate. Position 498 (Glu-498) interacts with Mg(2+).

The protein belongs to the anthranilate synthase component I family. Heterotetramer consisting of two non-identical subunits: a beta subunit (TrpG) and a large lpha subunit (TrpE). Mg(2+) is required as a cofactor.

The catalysed reaction is chorismate + L-glutamine = anthranilate + pyruvate + L-glutamate + H(+). It functions in the pathway amino-acid biosynthesis; L-tryptophan biosynthesis; L-tryptophan from chorismate: step 1/5. Its activity is regulated as follows. Cooperatively feedback inhibited by tryptophan. Part of a heterotetrameric complex that catalyzes the two-step biosynthesis of anthranilate, an intermediate in the biosynthesis of L-tryptophan. In the first step, the glutamine-binding beta subunit (TrpG) of anthranilate synthase (AS) provides the glutamine amidotransferase activity which generates ammonia as a substrate that, along with chorismate, is used in the second step, catalyzed by the large alpha subunit of AS (TrpE) to produce anthranilate. In the absence of TrpG, TrpE can synthesize anthranilate directly from chorismate and high concentrations of ammonia. The protein is Anthranilate synthase component 1 (trpE) of Escherichia coli (strain K12).